The chain runs to 243 residues: Small ribosomal subunit protein eS4 (243 aa).

One can recognise an S4 RNA-binding domain in the interval 43-105 (IPLLYIVRDY…TGEHYRVLPN (63 aa)).

This sequence belongs to the eukaryotic ribosomal protein eS4 family.

This Pyrococcus abyssi (strain GE5 / Orsay) protein is Small ribosomal subunit protein eS4 (rps4e).